A 32-amino-acid polypeptide reads, in one-letter code: Protamine-3A (32 aa).

A disordered region spans residues 1–32 (PRRRRRSSSRPIRRRRRPRVSRRRRRGGRRRR).

In terms of tissue distribution, testis.

Its subcellular location is the nucleus. The protein resides in the chromosome. Functionally, protamines substitute for histones in the chromatin of sperm during the haploid phase of spermatogenesis. They compact sperm DNA into a highly condensed, stable and inactive complex. The protein is Protamine-3A of Oncorhynchus mykiss (Rainbow trout).